We begin with the raw amino-acid sequence, 146 residues long: Gastrin-releasing peptide (146 aa).

The first 23 residues, 1-23, serve as a signal peptide directing secretion; that stretch reads MRGSELSLLLLALVLCQAPRGPA. Methionine amide is present on Met52. Positions 56–146 are excised as a propeptide; sequence STDESPSLYA…VLKEKGGTAS (91 aa). Over residues 94-112 the composition is skewed to low complexity; it reads AAGNQSHQPPQHPPLSLQP. A disordered region spans residues 94–121; it reads AAGNQSHQPPQHPPLSLQPTWDPEDGSY.

The protein belongs to the bombesin/neuromedin-B/ranatensin family. As to expression, detected in peptidergic dorsal root ganglion neurons (at protein level). Expressed in several dozen neurons throughout the dorsal retrotrapezoid nucleus/parafacial respiratory group (RTN/pFRG) as well as in scattered cells in the nucleus tractus solitarius and parabrachial nucleus (at protein level). Within the RTN/pFRG, expressed in neuronal subpopulations distinct from those expressing Nmb (at protein level). Expressed in L6 corticothalamic neurons (at protein level). Strongly expressed in several input areas of the auditory cortex including the lateral amygdala, contralateral auditory cortex, temporal association area, perirhinal cortex and auditory thalamic nuclei (at protein level). Detected in the suprachiasmatic nucleus in the hypothalamus. Detected in a subset of glutamatergic cells in the cortex. Highly expressed both in the lateral nucleus of the amygdala, and in regions sending synaptic projections to the lateral nucleus.

Its subcellular location is the secreted. The protein resides in the cytoplasmic vesicle. It is found in the secretory vesicle lumen. The protein localises to the cell projection. It localises to the neuron projection. In terms of biological role, stimulates the release of gastrin and other gastrointestinal hormones. Contributes to the perception of prurient stimuli and to the transmission of itch signals in the spinal cord that promote scratching behavior. Contributes primarily to nonhistaminergic itch sensation. In one study, shown to act in the amygdala as part of an inhibitory network which inhibits memory specifically related to learned fear. In another study, shown to act on vasoactive intestinal peptide (VIP)-expressing cells in the auditory cortex, most likely via extrasynaptic diffusion from local and long-range sources, to mediate disinhibition of glutamatergic cells via VIP cell-specific GRPR signaling which leads to enhanced auditory fear memories. Contributes to the regulation of food intake. Inhibits voltage-gated sodium channels but enhances voltage-gated potassium channels in hippocampal neurons. Contributes to the induction of sighing by acting directly on the pre-Botzinger complex, a cluster of several thousand neurons in the ventrolateral medulla responsible for inspiration during respiratory activity. Its function is as follows. Induces an itch response through activation of receptors present on mast cells, triggering mast cell degranulation. In Mus musculus (Mouse), this protein is Gastrin-releasing peptide (Grp).